An 855-amino-acid chain; its full sequence is Inactive rhomboid protein 1 (855 aa).

The interval Met-1–Ser-36 is disordered. Topologically, residues Met-1–Thr-411 are cytoplasmic. Positions Pro-25–Ser-36 are enriched in low complexity. Ser-76 and Ser-176 each carry phosphoserine. Phosphothreonine occurs at positions 180 and 183. Position 390 is a phosphoserine (Ser-390). A helical transmembrane segment spans residues Phe-412–Phe-432. Residues Ser-433–Arg-655 lie on the Lumenal side of the membrane. An N-linked (GlcNAc...) asparagine glycan is attached at Asn-583. A helical transmembrane segment spans residues Leu-656–Gln-676. Over Met-677–Arg-691 the chain is Cytoplasmic. A helical transmembrane segment spans residues Ile-692–Pro-712. The Lumenal portion of the chain corresponds to Tyr-713–Arg-714. The helical transmembrane segment at Ala-715–Phe-735 threads the bilayer. The Cytoplasmic portion of the chain corresponds to Gln-736 to Arg-746. A helical transmembrane segment spans residues Ala-747–Ile-767. At Asp-768–His-772 the chain is on the lumenal side. Residues Ile-773–Gly-793 form a helical membrane-spanning segment. At Lys-794–Gln-803 the chain is on the cytoplasmic side. A helical transmembrane segment spans residues Ile-804 to Phe-824. The Lumenal segment spans residues Tyr-825–His-855.

This sequence belongs to the peptidase S54 family. Homodimer, or homooligomer. Interacts with TGFA and HBEGF. Interacts with EGF; may retain EGF in the endoplasmic reticulum and regulates its degradation through the endoplasmic reticulum-associated degradation (ERAD). Interacts (via cytoplasmic N-terminus) with FRMD8/iTAP; this interaction leads to mutual protein stabilization. Interacts with ADAM17/TACE.

The protein resides in the endoplasmic reticulum membrane. It is found in the golgi apparatus membrane. Functionally, regulates ADAM17 protease, a sheddase of the epidermal growth factor (EGF) receptor ligands and TNF, thereby plays a role in sleep, cell survival, proliferation, migration and inflammation. Does not exhibit any protease activity on its own. The polypeptide is Inactive rhomboid protein 1 (RHBDF1) (Plecturocebus moloch (Dusky titi monkey)).